Reading from the N-terminus, the 1462-residue chain is MSNKFEILMNQLDMPLEMRNSEAFLNAEIEKVLVHKVSRVWEFHFSFANILPIEIFRELQKRLAQEFSKTGNQAVFEIHCQAPQVSDELLQAYYQLAFEEGPCASHGFKSLYQDLRVHLDGDKLLIEGASTIDTEHFRKNHLPNLSQQLVKYGFPQLTCLVQHSDELTQQQAENFQAENDKIVQAANEEALKAMESLQQMAPPPEEKPAYDFQARKAAAKPKLDKAEITPMIEVQTEENRLVFEGMVFDLEQKVTRTGRVLLNFKMTDYTSSFSLQKWMKNEEEAKKFDMIKKGAWLRVRGNVEMNNFTRDLTMNVQDVQAVTHYERKDLMPEGQKRVEFHAHTNMSTMDALPEVEEIVATAAKWGHKAVAITDHGNVQSFPHGYKAAKKAGIQLIYGMEANIVEDRVPIVYNEVDMELSDATYVVFDVETTGLSAVYNDLIQVAASKMHKGNIIAEFDEFINPGHPLSAFTTDLTGITDEHVRNAKPLEQVLKEFQEFCQDSVLVAHNATFDVGFMNVNYERHGLPKIIQPVIDTLEFARNLYPEYKRHGLGPLTKRFQIALEHHHMANYDAEATGRLLFIFIKDVAEKHGVTNLKDLNTDLVDENSYKKARVKHATIYVKNQTGLKNIFKLVSLSNTKYFEGVPRIPRTVLDAHREGLILGSACSEGEVYDAVVSQGVDAAVEVAKYYDFIEVMPPAIYEPLIAKEQIKDQEELQTIIRNLIEVGDRLGKPVLATGNVHYIEPEEEIYREIIVRSLGQGAMINRTIGHGENAQPAPLPKAHFRTTNEMLDEFAFLGEDLAKKLVITNPNQLAETFEPVEVVKGDLYTPFIDKAEETVAELTYQKAFEIYGNPLPDIVDLRIEKELTSILGNGFAVIYLASQMLVQRSNERGYLVGSRGSVGSSFVATMIGITEVNPLSPHYVCGKCQYSEFITDGSYGSGFDMPDKDCPECGHKLSKNGQDIPFETFLGFDGDKVPDIDLNFSGEDQPSAHLDVRDIFGSEYAFRAGTVGTVAAKTAYGFVKGYERDYGKFYRDAEVERLAQGAAGVKRTTGQHPGGIVVIPNYMDVYDFTPVQYPADDVTAEWQTTHFNFHDIDENVLKLDVLGHDDPTMIRKLQDLSGIDPNDIPMDDAGVMALFSGTDILGVTQEQIGTPTGMLGIPEFGTNFVRGMVDETHPTTFAELLQLSGLSHGTDVWLGNAQDLIKQGIADLSTVIGCRDDIMVYLMHKGLDPKMAFTIMERVRKGLWLKISEEERNGYIAAMKENNVPEWYIESCGKIKYMFPKAHAAAYVMMALRVAYFKVHHPIYYYCAYFSIRAKAFDIKTMSGGLDAVKRRMSEIAEKRKNNEASNVEIDLYTTLEIVNEMLERGFKFGKLDLYKSHATEFLIEGDTLIPPFSAMDGLGDNVARQVVRAREEGEFLSKTELRKRGGLSSTLVEKMDDMGILGNMPEDNQLSLFDEFF.

One can recognise an Exonuclease domain in the interval 424-580 (YVVFDVETTG…YDAEATGRLL (157 aa)).

This sequence belongs to the DNA polymerase type-C family. PolC subfamily.

The protein localises to the cytoplasm. The catalysed reaction is DNA(n) + a 2'-deoxyribonucleoside 5'-triphosphate = DNA(n+1) + diphosphate. Functionally, required for replicative DNA synthesis. This DNA polymerase also exhibits 3' to 5' exonuclease activity. The protein is DNA polymerase III PolC-type of Streptococcus sanguinis (strain SK36).